The chain runs to 76 residues: uncharacterized protein (76 aa).

A signal peptide spans 1 to 20; the sequence is MKNAVLVFLLLSVFALSVNA.

Prismatic layer of shell (at protein level). Expressed primarily in the mantle with equal levels in the mantle edge and the mantle pallium.

It is found in the secreted. This is an uncharacterized protein from Margaritifera margaritifera (Freshwater pearl mussel).